A 1159-amino-acid chain; its full sequence is ATP-dependent helicase/deoxyribonuclease subunit B (1159 aa).

One can recognise a UvrD-like helicase ATP-binding domain in the interval Met1 to Val401. Gly8–Ser15 is a binding site for ATP. Positions Pro279 to Gly582 constitute a UvrD-like helicase C-terminal domain. Residues Cys787, Cys1106, Cys1109, and Cys1115 each coordinate [4Fe-4S] cluster.

Belongs to the helicase family. AddB/RexB type 1 subfamily. In terms of assembly, heterodimer of AddA and AddB. Requires Mg(2+) as cofactor. It depends on [4Fe-4S] cluster as a cofactor.

Its function is as follows. The heterodimer acts as both an ATP-dependent DNA helicase and an ATP-dependent, dual-direction single-stranded exonuclease. Recognizes the chi site generating a DNA molecule suitable for the initiation of homologous recombination. The AddB subunit has 5' -&gt; 3' nuclease activity but not helicase activity. This Clostridium beijerinckii (strain ATCC 51743 / NCIMB 8052) (Clostridium acetobutylicum) protein is ATP-dependent helicase/deoxyribonuclease subunit B.